The sequence spans 516 residues: Phosphatidylserine decarboxylase proenzyme 2, mitochondrial (516 aa).

A mitochondrion-targeting transit peptide spans 1 to 21 (MRPRQRFRRFHPRWSKVNLRG). At 22–33 (FGGVGALKGVKA) the chain is on the mitochondrial matrix side. A helical transmembrane segment spans residues 34–52 (LNGMNVRVSMRLKWISNRI). The Mitochondrial intermembrane portion of the chain corresponds to 53–516 (HRIRRSRRLG…GQYVRVGEAL (464 aa)). Active-site charge relay system; for autoendoproteolytic cleavage activity residues include Asp-159, His-373, and Ser-488. Residue Ser-488 is the Schiff-base intermediate with substrate; via pyruvic acid; for decarboxylase activity of the active site. Ser-488 carries the pyruvic acid (Ser); by autocatalysis modification.

This sequence belongs to the phosphatidylserine decarboxylase family. PSD-B subfamily. Eukaryotic type I sub-subfamily. In terms of assembly, heterodimer of a large membrane-associated beta subunit and a small pyruvoyl-containing alpha subunit. It depends on pyruvate as a cofactor. Is synthesized initially as an inactive proenzyme. Formation of the active enzyme involves a self-maturation process in which the active site pyruvoyl group is generated from an internal serine residue via an autocatalytic post-translational modification. Two non-identical subunits are generated from the proenzyme in this reaction, and the pyruvate is formed at the N-terminus of the alpha chain, which is derived from the carboxyl end of the proenzyme. The autoendoproteolytic cleavage occurs by a canonical serine protease mechanism, in which the side chain hydroxyl group of the serine supplies its oxygen atom to form the C-terminus of the beta chain, while the remainder of the serine residue undergoes an oxidative deamination to produce ammonia and the pyruvoyl prosthetic group on the alpha chain. During this reaction, the Ser that is part of the protease active site of the proenzyme becomes the pyruvoyl prosthetic group, which constitutes an essential element of the active site of the mature decarboxylase.

Its subcellular location is the mitochondrion. The protein resides in the mitochondrion inner membrane. It localises to the nucleus envelope. The protein localises to the lipid droplet. It is found in the endoplasmic reticulum membrane. The enzyme catalyses a 1,2-diacyl-sn-glycero-3-phospho-L-serine + H(+) = a 1,2-diacyl-sn-glycero-3-phosphoethanolamine + CO2. It participates in phospholipid metabolism; phosphatidylethanolamine biosynthesis; phosphatidylethanolamine from CDP-diacylglycerol: step 2/2. In terms of biological role, catalyzes the formation of phosphatidylethanolamine (PtdEtn) from phosphatidylserine (PtdSer). Plays a central role in phospholipid metabolism and in the interorganelle trafficking of phosphatidylserine. Together with psd1 and psd3, responsible for the majority of phosphatidylethanolamine synthesis. Plays a role in lipid droplet biogenesis at the endoplasmic reticulum membrane. The chain is Phosphatidylserine decarboxylase proenzyme 2, mitochondrial from Schizosaccharomyces pombe (strain 972 / ATCC 24843) (Fission yeast).